We begin with the raw amino-acid sequence, 200 residues long: Probable GTP-binding protein EngB (200 aa).

Residues glutamate 24–leucine 199 form the EngB-type G domain. GTP-binding positions include glycine 32 to serine 39, glycine 59 to glutamine 63, aspartate 77 to glycine 80, threonine 144 to aspartate 147, and phenylalanine 178 to glycine 180. Mg(2+) contacts are provided by serine 39 and threonine 61.

This sequence belongs to the TRAFAC class TrmE-Era-EngA-EngB-Septin-like GTPase superfamily. EngB GTPase family. It depends on Mg(2+) as a cofactor.

Functionally, necessary for normal cell division and for the maintenance of normal septation. The protein is Probable GTP-binding protein EngB of Stenotrophomonas maltophilia (strain K279a).